The following is a 652-amino-acid chain: DNA ligase (652 aa).

Residues D29–D33, S78–L79, and E107 each bind NAD(+). K109 serves as the catalytic N6-AMP-lysine intermediate. The NAD(+) site is built by R130, E164, K278, and K302. Residues C395, C398, C413, and C418 each contribute to the Zn(2+) site. Residues A577 to L652 form the BRCT domain.

This sequence belongs to the NAD-dependent DNA ligase family. LigA subfamily. The cofactor is Mg(2+). Mn(2+) serves as cofactor.

The enzyme catalyses NAD(+) + (deoxyribonucleotide)n-3'-hydroxyl + 5'-phospho-(deoxyribonucleotide)m = (deoxyribonucleotide)n+m + AMP + beta-nicotinamide D-nucleotide.. DNA ligase that catalyzes the formation of phosphodiester linkages between 5'-phosphoryl and 3'-hydroxyl groups in double-stranded DNA using NAD as a coenzyme and as the energy source for the reaction. It is essential for DNA replication and repair of damaged DNA. The sequence is that of DNA ligase from Streptococcus mutans serotype c (strain ATCC 700610 / UA159).